Reading from the N-terminus, the 344-residue chain is Unsaturated rhamnogalacturonyl hydrolase YesR (344 aa).

Substrate contacts are provided by residues 30-31 (DW), asparagine 74, and 118-128 (QHTVNAAEYVF). Aspartate 135 acts as the Proton donor in catalysis. Substrate contacts are provided by residues 198 to 202 (RANGW) and 308 to 309 (NA).

Belongs to the glycosyl hydrolase 105 family. In terms of assembly, monomer.

It is found in the cytoplasm. It catalyses the reaction 2-O-(4-deoxy-beta-L-threo-hex-4-enopyranuronosyl)-alpha-L-rhamnose + H2O = 5-dehydro-4-deoxy-D-glucuronate + L-rhamnopyranose. In terms of biological role, catalyzes the hydrolysis of unsaturated rhamnogalacturonan disaccharide to yield unsaturated D-galacturonic acid and L-rhamnose. It cannot act on unsaturated glucuronyl hydrolase (UGL) substrates containing unsaturated D-glucuronic acid at the non-reducing terminus, although the active pockets of YesR and UGL are very similar. This is Unsaturated rhamnogalacturonyl hydrolase YesR (yesR) from Bacillus subtilis (strain 168).